A 225-amino-acid chain; its full sequence is Large ribosomal subunit protein bL25 (225 aa).

The interval 206-225 is disordered; it reads EDSKNKITKDNETNKDKSNL.

It belongs to the bacterial ribosomal protein bL25 family. CTC subfamily. In terms of assembly, part of the 50S ribosomal subunit; part of the 5S rRNA/L5/L18/L25 subcomplex. Contacts the 5S rRNA. Binds to the 5S rRNA independently of L5 and L18.

This is one of the proteins that binds to the 5S RNA in the ribosome where it forms part of the central protuberance. The sequence is that of Large ribosomal subunit protein bL25 from Vesicomyosocius okutanii subsp. Calyptogena okutanii (strain HA).